Consider the following 196-residue polypeptide: Cilia- and flagella-associated protein 107 (196 aa).

Mn stretches follow at residues 47 to 62 (TPQC…MPDH) and 97 to 109 (ISTY…RHNY).

As to quaternary structure, microtubule inner protein component of sperm flagellar doublet microtubules.

It is found in the cytoplasm. Its subcellular location is the cytoskeleton. It localises to the cilium axoneme. The protein localises to the flagellum axoneme. Functionally, microtubule inner protein (MIP) part of the dynein-decorated doublet microtubules (DMTs) in cilia axoneme, which is required for motile cilia beating. The chain is Cilia- and flagella-associated protein 107 from Mus musculus (Mouse).